A 254-amino-acid chain; its full sequence is Leucyl/phenylalanyl-tRNA--protein transferase (254 aa).

The protein belongs to the L/F-transferase family.

Its subcellular location is the cytoplasm. It catalyses the reaction N-terminal L-lysyl-[protein] + L-leucyl-tRNA(Leu) = N-terminal L-leucyl-L-lysyl-[protein] + tRNA(Leu) + H(+). The catalysed reaction is N-terminal L-arginyl-[protein] + L-leucyl-tRNA(Leu) = N-terminal L-leucyl-L-arginyl-[protein] + tRNA(Leu) + H(+). The enzyme catalyses L-phenylalanyl-tRNA(Phe) + an N-terminal L-alpha-aminoacyl-[protein] = an N-terminal L-phenylalanyl-L-alpha-aminoacyl-[protein] + tRNA(Phe). In terms of biological role, functions in the N-end rule pathway of protein degradation where it conjugates Leu, Phe and, less efficiently, Met from aminoacyl-tRNAs to the N-termini of proteins containing an N-terminal arginine or lysine. The polypeptide is Leucyl/phenylalanyl-tRNA--protein transferase (Burkholderia vietnamiensis (strain G4 / LMG 22486) (Burkholderia cepacia (strain R1808))).